The chain runs to 674 residues: Protein asunder (674 aa).

A coiled-coil region spans residues 516 to 538 (HKAKDQYRLLYRELEQLIQLNAS). A Nuclear localization signal (NLS) motif is present at residues 601 to 607 (LKASKRR).

Belongs to the Integrator subunit 13 family. Belongs to the multiprotein complex Integrator, at least composed of IntS1, IntS2, IntS3, IntS4, omd/IntS5, IntS6, defl/IntS7, IntS8, IntS9, IntS10, IntS11, IntS12, asun/IntS13, IntS14 and IntS15. The core complex associates with protein phosphatase 2A subunits mts/PP2A and Pp2A-29B, to form the Integrator-PP2A (INTAC) complex. Post-translationally, phosphorylated.

The protein localises to the nucleus. The protein resides in the cytoplasm. It localises to the perinuclear region. Its function is as follows. Component of the integrator complex, a multiprotein complex that terminates RNA polymerase II (Pol II) transcription in the promoter-proximal region of genes. The integrator complex provides a quality checkpoint during transcription elongation by driving premature transcription termination of transcripts that are unfavorably configured for transcriptional elongation: the complex terminates transcription by (1) catalyzing dephosphorylation of the C-terminal domain (CTD) of Pol II subunit Polr2A/Rbp1 and Spt5, and (2) degrading the exiting nascent RNA transcript via endonuclease activity. The integrator complex is also involved in the 3'-end processing of the U7 snRNA, and also the spliceosomal snRNAs U1, U2, U4 and U5. The chain is Protein asunder (asun) from Drosophila persimilis (Fruit fly).